Reading from the N-terminus, the 321-residue chain is Glutaminase (321 aa).

Residues S69, N120, E165, N172, Y196, Y248, and V266 each coordinate substrate.

The protein belongs to the glutaminase family. In terms of assembly, homotetramer.

It carries out the reaction L-glutamine + H2O = L-glutamate + NH4(+). The chain is Glutaminase from Parabacteroides distasonis (strain ATCC 8503 / DSM 20701 / CIP 104284 / JCM 5825 / NCTC 11152).